The primary structure comprises 434 residues: Protein POLLENLESS 3 (434 aa).

The disordered stretch occupies residues 13 to 47 (VYYTPPPARTSDHVAAMPMTERRRPPYSCSSSSER). The Nuclear localization signal 1 motif lies at 34–37 (RRRP). TPR repeat units follow at residues 95-131 (DSALKDMAVVMKQLGRSDEGIEAIKSFRYLCSFESQD), 133-164 (IDNLLLELYKKSGRIEEEAVLLEHKLQTLEQG), 191-224 (ARILGNLGWVHLQLHNYGIAEQHYRRALGLERDK), and 241-274 (PEAKSLLDDVRDSPAESECGDEPFAKSYDRAVEM). The stretch at 142 to 166 (KKSGRIEEEAVLLEHKLQTLEQGMG) forms a coiled coil. The tract at residues 309–329 (TANKNYSDVSSSPASVRPNSA) is disordered. Over residues 310-326 (ANKNYSDVSSSPASVRP) the composition is skewed to polar residues. The short motif at 377-380 (KRKK) is the Nuclear localization signal 2 element. The segment covering 393–408 (VKDTADGPKSESKKSW) has biased composition (basic and acidic residues). The disordered stretch occupies residues 393–434 (VKDTADGPKSESKKSWADIAEEEEAEEEEEERLQGELKTAEM). The stretch at 408–434 (WADIAEEEEAEEEEEERLQGELKTAEM) forms a coiled coil. Positions 411–423 (IAEEEEAEEEEEE) are enriched in acidic residues. Basic and acidic residues predominate over residues 424 to 434 (RLQGELKTAEM).

Belongs to the MS5 protein family. In terms of tissue distribution, expressed at low levels mostly in floral organs during meiosis. Also barely detectable in leaves, stems and roots.

The protein resides in the nucleus. In terms of biological role, essential for male fertility, especially for microspore and pollen grain production. Involved in the regulation of cell division after male meiosis I and II to facilitate exit from meiosis and transition to G1. The sequence is that of Protein POLLENLESS 3 from Arabidopsis thaliana (Mouse-ear cress).